The following is a 588-amino-acid chain: Mediator of RNA polymerase II transcription subunit 26 (588 aa).

Residues 10–87 (QMRDRLLQAI…RSWQKLIEPV (78 aa)) enclose the TFIIS N-terminal domain. 2 disordered regions span residues 112–393 (RPEM…YTVN) and 412–441 (KLTF…PTEQ). Residues 123 to 133 (SIHDLKNRNDI) show a composition bias toward basic and acidic residues. The segment covering 179–191 (PLPTNGISGSPES) has biased composition (polar residues). Positions 207–218 (SRLEPSDNEKHS) are enriched in basic and acidic residues. The segment covering 314–325 (SPLPLAQPPTPP) has biased composition (pro residues). A phosphoserine mark is found at Ser435 and Ser458.

It belongs to the Mediator complex subunit 26 family. In terms of assembly, component of the Mediator complex, which is composed of MED1, MED4, MED6, MED7, MED8, MED9, MED10, MED11, MED12, MED13, MED13L, MED14, MED15, MED16, MED17, MED18, MED19, MED20, MED21, MED22, MED23, MED24, MED25, MED26, MED27, MED29, MED30, MED31, CCNC, CDK8 and CDC2L6/CDK11. The MED12, MED13, CCNC and CDK8 subunits form a distinct module termed the CDK8 module. Mediator containing the CDK8 module is less active than Mediator lacking this module in supporting transcriptional activation. Individual preparations of the Mediator complex lacking one or more distinct subunits have been variously termed ARC, CRSP, DRIP, PC2, SMCC and TRAP. Interacts with CEBPB (when not methylated).

Its subcellular location is the nucleus. In terms of biological role, component of the Mediator complex, a coactivator involved in the regulated transcription of nearly all RNA polymerase II-dependent genes. Mediator functions as a bridge to convey information from gene-specific regulatory proteins to the basal RNA polymerase II transcription machinery. Mediator is recruited to promoters by direct interactions with regulatory proteins and serves as a scaffold for the assembly of a functional pre-initiation complex with RNA polymerase II and the general transcription factors. This Mus musculus (Mouse) protein is Mediator of RNA polymerase II transcription subunit 26 (Med26).